The chain runs to 177 residues: ATP synthase subunit delta (177 aa).

Belongs to the ATPase delta chain family. F-type ATPases have 2 components, F(1) - the catalytic core - and F(0) - the membrane proton channel. F(1) has five subunits: alpha(3), beta(3), gamma(1), delta(1), epsilon(1). CF(0) has four main subunits: a(1), b(1), b'(1) and c(10-14). The alpha and beta chains form an alternating ring which encloses part of the gamma chain. F(1) is attached to F(0) by a central stalk formed by the gamma and epsilon chains, while a peripheral stalk is formed by the delta, b and b' chains.

The protein resides in the cell inner membrane. Functionally, f(1)F(0) ATP synthase produces ATP from ADP in the presence of a proton or sodium gradient. F-type ATPases consist of two structural domains, F(1) containing the extramembraneous catalytic core and F(0) containing the membrane proton channel, linked together by a central stalk and a peripheral stalk. During catalysis, ATP synthesis in the catalytic domain of F(1) is coupled via a rotary mechanism of the central stalk subunits to proton translocation. In terms of biological role, this protein is part of the stalk that links CF(0) to CF(1). It either transmits conformational changes from CF(0) to CF(1) or is implicated in proton conduction. This chain is ATP synthase subunit delta, found in Methylibium petroleiphilum (strain ATCC BAA-1232 / LMG 22953 / PM1).